The sequence spans 362 residues: Ribosomal RNA large subunit methyltransferase F (362 aa).

Residues 1–28 (MNTPLKPKHGQKTNRKPKANKPVVKKQQ) show a composition bias toward basic residues. Residues 1-40 (MNTPLKPKHGQKTNRKPKANKPVVKKQQTKQPPTHKVQGE) form a disordered region.

It belongs to the methyltransferase superfamily. METTL16/RlmF family.

The protein resides in the cytoplasm. The enzyme catalyses adenosine(1618) in 23S rRNA + S-adenosyl-L-methionine = N(6)-methyladenosine(1618) in 23S rRNA + S-adenosyl-L-homocysteine + H(+). Specifically methylates the adenine in position 1618 of 23S rRNA. In Vibrio cholerae serotype O1 (strain M66-2), this protein is Ribosomal RNA large subunit methyltransferase F.